The primary structure comprises 379 residues: tRNA(Met) cytidine acetate ligase (379 aa).

ATP-binding positions include 7 to 20 (ITEYNPFHNGHQYH), glycine 100, asparagine 153, and arginine 178.

The protein belongs to the TmcAL family.

It localises to the cytoplasm. It catalyses the reaction cytidine(34) in elongator tRNA(Met) + acetate + ATP = N(4)-acetylcytidine(34) in elongator tRNA(Met) + AMP + diphosphate. Its function is as follows. Catalyzes the formation of N(4)-acetylcytidine (ac(4)C) at the wobble position of elongator tRNA(Met), using acetate and ATP as substrates. First activates an acetate ion to form acetyladenylate (Ac-AMP) and then transfers the acetyl group to tRNA to form ac(4)C34. The polypeptide is tRNA(Met) cytidine acetate ligase (Staphylococcus aureus (strain Mu3 / ATCC 700698)).